The primary structure comprises 61 residues: UPF0434 protein Avin_14770 (61 aa).

Belongs to the UPF0434 family.

In Azotobacter vinelandii (strain DJ / ATCC BAA-1303), this protein is UPF0434 protein Avin_14770.